The following is a 371-amino-acid chain: Maltose/maltodextrin import ATP-binding protein MalK (371 aa).

An ABC transporter domain is found at 4–234 (VQLQNVTKAW…PADRFVAGFI (231 aa)). 36–43 (GPSGCGKS) contributes to the ATP binding site.

It belongs to the ABC transporter superfamily. Maltooligosaccharide importer (TC 3.A.1.1.1) family. The complex is composed of two ATP-binding proteins (MalK), two transmembrane proteins (MalG and MalK) and a solute-binding protein (MalE).

Its subcellular location is the cell inner membrane. It catalyses the reaction D-maltose(out) + ATP + H2O = D-maltose(in) + ADP + phosphate + H(+). Functionally, part of the ABC transporter complex MalEFGK involved in maltose/maltodextrin import. Responsible for energy coupling to the transport system. The chain is Maltose/maltodextrin import ATP-binding protein MalK from Shigella flexneri serotype 5b (strain 8401).